We begin with the raw amino-acid sequence, 161 residues long: 2-C-methyl-D-erythritol 2,4-cyclodiphosphate synthase (161 aa).

2 residues coordinate a divalent metal cation: Asp10 and His12. 4-CDP-2-C-methyl-D-erythritol 2-phosphate contacts are provided by residues 10–12 and 36–37; these read DVH and HS. A divalent metal cation is bound at residue His44. Residues 58–60, 63–67, 102–108, 134–137, Phe141, and Arg144 contribute to the 4-CDP-2-C-methyl-D-erythritol 2-phosphate site; these read DIG, FPDTD, AQAPKMA, and TTTE.

It belongs to the IspF family. Homotrimer. A divalent metal cation serves as cofactor.

The catalysed reaction is 4-CDP-2-C-methyl-D-erythritol 2-phosphate = 2-C-methyl-D-erythritol 2,4-cyclic diphosphate + CMP. The protein operates within isoprenoid biosynthesis; isopentenyl diphosphate biosynthesis via DXP pathway; isopentenyl diphosphate from 1-deoxy-D-xylulose 5-phosphate: step 4/6. In terms of biological role, involved in the biosynthesis of isopentenyl diphosphate (IPP) and dimethylallyl diphosphate (DMAPP), two major building blocks of isoprenoid compounds. Catalyzes the conversion of 4-diphosphocytidyl-2-C-methyl-D-erythritol 2-phosphate (CDP-ME2P) to 2-C-methyl-D-erythritol 2,4-cyclodiphosphate (ME-CPP) with a corresponding release of cytidine 5-monophosphate (CMP). This is 2-C-methyl-D-erythritol 2,4-cyclodiphosphate synthase from Shewanella sediminis (strain HAW-EB3).